The chain runs to 403 residues: Acetyl-CoA acetyltransferase IA (403 aa).

C91 serves as the catalytic Acyl-thioester intermediate. Catalysis depends on proton acceptor residues H353 and C383. Residues 401–403 (AKL) carry the Microbody targeting signal motif.

Belongs to the thiolase-like superfamily. Thiolase family. As to quaternary structure, multimeric.

The protein resides in the peroxisome. It catalyses the reaction 2 acetyl-CoA = acetoacetyl-CoA + CoA. It functions in the pathway metabolic intermediate biosynthesis; (R)-mevalonate biosynthesis; (R)-mevalonate from acetyl-CoA: step 1/3. The chain is Acetyl-CoA acetyltransferase IA (PACTA) from Candida tropicalis (Yeast).